The chain runs to 492 residues: Excitatory amino acid transporter (492 aa).

The Cytoplasmic portion of the chain corresponds to 1 to 7 (MVSWIRK). Helical transmembrane passes span 8 to 28 (NLLL…GFLL), 47 to 67 (LLMH…LISG), and 85 to 105 (TYYM…VLVI). Residues 106–191 (HPGDPTIKKE…VKASVEYTSG (86 aa)) are Extracellular-facing. N-linked (GlcNAc...) asparagine glycosylation is found at N166 and N176. 5 consecutive transmembrane segments (helical) span residues 192–212 (MNVL…SQLG), 228–248 (VIMK…LCLI), 270–290 (VTVL…IFFV), 358–378 (AVAA…GQVV), and 389–409 (IGAA…LTAV).

This sequence belongs to the dicarboxylate/amino acid:cation symporter (DAACS) (TC 2.A.23) family.

It is found in the membrane. Its function is as follows. Transports L-glutamate and also L- and D-aspartate. Essential for terminating the postsynaptic action of glutamate by rapidly removing released glutamate from the synaptic cleft. Acts as a symport by cotransporting sodium. This chain is Excitatory amino acid transporter (GLT-1), found in Onchocerca volvulus.